Consider the following 347-residue polypeptide: Heme A synthase (347 aa).

A run of 8 helical transmembrane segments spans residues V14–I34, Y95–F115, L125–L145, L166–L186, L198–A218, F260–L280, L289–V309, and I311–L331. H262 serves as a coordination point for heme. A heme-binding site is contributed by H317.

This sequence belongs to the COX15/CtaA family. Type 2 subfamily. In terms of assembly, interacts with CtaB. It depends on heme b as a cofactor.

The protein localises to the cell membrane. It catalyses the reaction Fe(II)-heme o + 2 A + H2O = Fe(II)-heme a + 2 AH2. The protein operates within porphyrin-containing compound metabolism; heme A biosynthesis; heme A from heme O: step 1/1. Functionally, catalyzes the conversion of heme O to heme A by two successive hydroxylations of the methyl group at C8. The first hydroxylation forms heme I, the second hydroxylation results in an unstable dihydroxymethyl group, which spontaneously dehydrates, resulting in the formyl group of heme A. This chain is Heme A synthase, found in Ehrlichia canis (strain Jake).